The following is a 364-amino-acid chain: Protein BRI1-5 ENHANCED 1 (364 aa).

Over residues 1–11 the composition is skewed to acidic residues; sequence MVREEQEEDDN. Residues 1-22 are disordered; it reads MVREEQEEDDNNNNNNGGGERK. NADP(+) is bound by residues 44–49, Arg-69, 98–99, Tyr-202, Lys-206, Val-232, and Ser-244; these read GGSGFV and DL. The active-site Proton donor is the Lys-206.

It belongs to the NAD(P)-dependent epimerase/dehydratase family. In terms of assembly, monomer. In terms of tissue distribution, mainly present in cell elongating-containing tissues. Strongly expressed in roots and flowers, also observed in petioles, stems, leaves and siliques.

The protein resides in the cytoplasm. Its pathway is plant hormone biosynthesis; brassinosteroid biosynthesis. In terms of biological role, element of the brassinosteroid metabolic pathway that regulates typhasterol (TY), castasterone (CS) and brassinolide (BL) levels. Involved in the control of organ elongation. This chain is Protein BRI1-5 ENHANCED 1, found in Arabidopsis thaliana (Mouse-ear cress).